The sequence spans 775 residues: Beta-galactosidase 7 (775 aa).

The first 17 residues, 1-17 (MRGGMAITAALVVVAAA), serve as a signal peptide directing secretion. Glu185 serves as the catalytic Proton donor. Glu256 serves as the catalytic Nucleophile. Residues Asn257, Asn266, Asn277, Asn358, and Asn602 are each glycosylated (N-linked (GlcNAc...) asparagine). Residues 689-775 (RGKVPKVRIW…KSLLVVADCR (87 aa)) enclose the SUEL-type lectin domain.

This sequence belongs to the glycosyl hydrolase 35 family.

It localises to the secreted. It is found in the extracellular space. The protein resides in the apoplast. It catalyses the reaction Hydrolysis of terminal non-reducing beta-D-galactose residues in beta-D-galactosides.. This chain is Beta-galactosidase 7, found in Oryza sativa subsp. japonica (Rice).